We begin with the raw amino-acid sequence, 143 residues long: Peptide methionine sulfoxide reductase MsrB (143 aa).

The MsrB domain occupies 16 to 139 (DAELRRRLTP…NSAALNFESR (124 aa)). Cys-55, Cys-58, Cys-104, and Cys-107 together coordinate Zn(2+). Residue Cys-128 is the Nucleophile of the active site.

Belongs to the MsrB Met sulfoxide reductase family. The cofactor is Zn(2+).

The enzyme catalyses L-methionyl-[protein] + [thioredoxin]-disulfide + H2O = L-methionyl-(R)-S-oxide-[protein] + [thioredoxin]-dithiol. In Burkholderia cenocepacia (strain ATCC BAA-245 / DSM 16553 / LMG 16656 / NCTC 13227 / J2315 / CF5610) (Burkholderia cepacia (strain J2315)), this protein is Peptide methionine sulfoxide reductase MsrB.